Here is a 256-residue protein sequence, read N- to C-terminus: Membrane-anchored junction protein (256 aa).

Over 1–232 the chain is Nuclear; the sequence is MSLKPFTYPF…HSSPPPPKEP (232 aa). Disordered regions lie at residues 143–197 and 211–235; these read KRKL…TPAS and HGLQGLVVPPLQHSSPPPPKEPGAR. Polar residues predominate over residues 164–173; that stretch reads ETSSEASSNK. A compositionally biased stretch (basic and acidic residues) spans 175 to 184; the sequence is PLKESKRSTD. Residues 233-251 form a helical membrane-spanning segment; sequence GARGFLGFLSALFPFRYFF. The Perinuclear space segment spans residues 252-256; that stretch reads KKSGQ.

The protein belongs to the MAJIN family. As to quaternary structure, component of the MAJIN-TERB1-TERB2 complex, composed of MAJIN, TERB1 and TERB2. In terms of tissue distribution, specifically expressed in germline tissues.

It localises to the nucleus inner membrane. It is found in the chromosome. The protein resides in the telomere. Meiosis-specific telomere-associated protein involved in meiotic telomere attachment to the nucleus inner membrane, a crucial step for homologous pairing and synapsis. Component of the MAJIN-TERB1-TERB2 complex, which promotes telomere cap exchange by mediating attachment of telomeric DNA to the inner nuclear membrane and replacement of the protective cap of telomeric chromosomes: in early meiosis, the MAJIN-TERB1-TERB2 complex associates with telomeric DNA and the shelterin/telosome complex. During prophase, the complex matures and promotes release of the shelterin/telosome complex from telomeric DNA. In the complex, MAJIN acts as the anchoring subunit to the nucleus inner membrane. MAJIN shows DNA-binding activity, possibly for the stabilization of telomere attachment on the nucleus inner membrane. The polypeptide is Membrane-anchored junction protein (Mus musculus (Mouse)).